Consider the following 456-residue polypeptide: Bifunctional protein GlmU (456 aa).

Positions 1 to 229 (MYKSAVILAA…PDEIKGVNSR (229 aa)) are pyrophosphorylase. Residues 8–11 (LAAG), Lys-22, Gln-73, and 78–79 (GT) each bind UDP-N-acetyl-alpha-D-glucosamine. Position 103 (Asp-103) interacts with Mg(2+). 4 residues coordinate UDP-N-acetyl-alpha-D-glucosamine: Gly-140, Glu-155, Asn-170, and Asn-227. Asn-227 lines the Mg(2+) pocket. The tract at residues 230–250 (GQLAEAEEILRLRINERHMEN) is linker. Positions 251–456 (GVTLIDPKNT…GWVAKKGLKK (206 aa)) are N-acetyltransferase. Residues Arg-332 and Lys-350 each coordinate UDP-N-acetyl-alpha-D-glucosamine. The Proton acceptor role is filled by His-362. UDP-N-acetyl-alpha-D-glucosamine is bound by residues Tyr-365 and Asn-376. Acetyl-CoA is bound by residues 385–386 (NY), Ala-422, and Arg-439.

This sequence in the N-terminal section; belongs to the N-acetylglucosamine-1-phosphate uridyltransferase family. In the C-terminal section; belongs to the transferase hexapeptide repeat family. In terms of assembly, homotrimer. Mg(2+) is required as a cofactor.

It is found in the cytoplasm. The enzyme catalyses alpha-D-glucosamine 1-phosphate + acetyl-CoA = N-acetyl-alpha-D-glucosamine 1-phosphate + CoA + H(+). It carries out the reaction N-acetyl-alpha-D-glucosamine 1-phosphate + UTP + H(+) = UDP-N-acetyl-alpha-D-glucosamine + diphosphate. Its pathway is nucleotide-sugar biosynthesis; UDP-N-acetyl-alpha-D-glucosamine biosynthesis; N-acetyl-alpha-D-glucosamine 1-phosphate from alpha-D-glucosamine 6-phosphate (route II): step 2/2. The protein operates within nucleotide-sugar biosynthesis; UDP-N-acetyl-alpha-D-glucosamine biosynthesis; UDP-N-acetyl-alpha-D-glucosamine from N-acetyl-alpha-D-glucosamine 1-phosphate: step 1/1. It participates in bacterial outer membrane biogenesis; LPS lipid A biosynthesis. In terms of biological role, catalyzes the last two sequential reactions in the de novo biosynthetic pathway for UDP-N-acetylglucosamine (UDP-GlcNAc). The C-terminal domain catalyzes the transfer of acetyl group from acetyl coenzyme A to glucosamine-1-phosphate (GlcN-1-P) to produce N-acetylglucosamine-1-phosphate (GlcNAc-1-P), which is converted into UDP-GlcNAc by the transfer of uridine 5-monophosphate (from uridine 5-triphosphate), a reaction catalyzed by the N-terminal domain. The protein is Bifunctional protein GlmU of Clostridium novyi (strain NT).